Consider the following 607-residue polypeptide: ATP-dependent RNA helicase dbp9 (607 aa).

The short motif at 24–52 (VTFASLGLDARLLQGIAKQNFQSPTLVQS) is the Q motif element. The 178-residue stretch at 55–232 (IPLTLEGRDI…GLFCRNPEVL (178 aa)) folds into the Helicase ATP-binding domain. 68–75 (AKTGSGKT) lines the ATP pocket. Positions 180–183 (DEAD) match the DEAD box motif. In terms of domain architecture, Helicase C-terminal spans 243 to 475 (GVSQFVVKCA…EVKPYNFDMK (233 aa)). Over residues 332-343 (VLGDEDEPKSGD) the composition is skewed to basic and acidic residues. 2 disordered regions span residues 332–380 (VLGD…GKKD) and 573–607 (TENRIRKARAANKAKGRGKGRKSDPLKTFKAKSKK). Over residues 344–356 (AEEVEADDADEEK) the composition is skewed to acidic residues. The span at 357–368 (EDAKDAKKETKQ) shows a compositional bias: basic and acidic residues. Basic residues predominate over residues 578–592 (RKARAANKAKGRGKG).

It belongs to the DEAD box helicase family. DDX56/DBP9 subfamily.

It is found in the nucleus. The protein resides in the nucleolus. The catalysed reaction is ATP + H2O = ADP + phosphate + H(+). ATP-binding RNA helicase involved in the biogenesis of 60S ribosomal subunits and is required for the normal formation of 25S and 5.8S rRNAs. The protein is ATP-dependent RNA helicase dbp9 (dbp9) of Botryotinia fuckeliana (strain B05.10) (Noble rot fungus).